An 856-amino-acid chain; its full sequence is DNA mismatch repair protein MutS (856 aa).

605–612 (GPNMSGKS) contributes to the ATP binding site.

It belongs to the DNA mismatch repair MutS family.

Functionally, this protein is involved in the repair of mismatches in DNA. It is possible that it carries out the mismatch recognition step. This protein has a weak ATPase activity. The chain is DNA mismatch repair protein MutS from Lysinibacillus sphaericus (strain C3-41).